We begin with the raw amino-acid sequence, 410 residues long: Regulator of microtubule dynamics protein 2 (410 aa).

Residues 10–27 (IFGIMVGTAGISLLLLWY) traverse the membrane as a helical segment. Residue Ser-51 is modified to Phosphoserine. The stretch at 68–110 (FQERQLQILEKLNELLTNMEELKEEIRFLKETVPKLEEYIQDE) forms a coiled coil. Ser-121 carries the post-translational modification Phosphoserine. Residues 122–131 (PQHRARKRRL) show a composition bias toward basic residues. The interval 122–151 (PQHRARKRRLPTIQSSATSNSSEEAESEGG) is disordered. At Thr-139 the chain carries Phosphothreonine. Tyr-152 bears the Phosphotyrosine mark. Residues Thr-154 and Thr-157 each carry the phosphothreonine modification.

Belongs to the RMDN family. As to quaternary structure, interacts with microtubules.

It localises to the membrane. The protein resides in the cytoplasm. Its subcellular location is the cytoskeleton. It is found in the spindle. The protein localises to the spindle pole. The sequence is that of Regulator of microtubule dynamics protein 2 (RMDN2) from Macaca fascicularis (Crab-eating macaque).